Reading from the N-terminus, the 144-residue chain is uncharacterized protein (144 aa).

The disordered stretch occupies residues 98-127 (PLADGATVDSQASENGEKEAQPTPPKEGLL).

This is an uncharacterized protein from Aedes vexans (Inland floodwater mosquito).